We begin with the raw amino-acid sequence, 336 residues long: Glutamyl endopeptidase (336 aa).

Positions 1 to 29 (MKGKFLKVSSLFVATLTTATLVSSPAANA) are cleaved as a signal peptide. The propeptide occupies 30-68 (LSSKAMDNHPQQTQSSKQQTPKIQKGGNLKPLEQREHAN). The disordered stretch occupies residues 34 to 61 (AMDNHPQQTQSSKQQTPKIQKGGNLKPL). Positions 39–51 (PQQTQSSKQQTPK) are enriched in low complexity. Active-site charge relay system residues include histidine 119, aspartate 161, and serine 237. The disordered stretch occupies residues 283–336 (FANDDQPNNPDNPDNPNNPDNPNNPDEPNNPDNPNNPDNPDNGDTNNSDNPDAA). Positions 286–336 (DDQPNNPDNPDNPNNPDNPNNPDEPNNPDNPNNPDNPDNGDTNNSDNPDAA) are enriched in low complexity. A run of 11 repeats spans residues 289 to 291 (PNN), 292 to 294 (PDN), 295 to 297 (PDN), 298 to 300 (PNN), 301 to 303 (PDN), 304 to 306 (PNN), 310 to 312 (PNN), 313 to 315 (PDN), 316 to 318 (PNN), 319 to 321 (PDN), and 322 to 324 (PDN). The segment at 289–324 (PNNPDNPDNPNNPDNPNNPDEPNNPDNPNNPDNPDN) is 11 X 3 AA repeats of P-[DN]-N.

It belongs to the peptidase S1B family. Proteolytically cleaved by aureolysin (aur). This cleavage leads to the activation of SspA.

The protein localises to the secreted. The catalysed reaction is Preferential cleavage: Glu-|-Xaa, Asp-|-Xaa.. In terms of biological role, preferentially cleaves peptide bonds on the carboxyl-terminal side of aspartate and glutamate. Along with other extracellular proteases it is involved in colonization and infection of human tissues. Required for proteolytic maturation of thiol protease SspB and inactivation of SspC, an inhibitor of SspB. It is the most important protease for degradation of fibronectin-binding protein (FnBP) and surface protein A, which are involved in adherence to host cells. May also protect bacteria against host defense mechanism by cleaving the immunoglobulin classes IgG, IgA and IgM. May be involved in the stability of secreted lipases. This is Glutamyl endopeptidase (sspA) from Staphylococcus aureus (strain COL).